Here is a 662-residue protein sequence, read N- to C-terminus: Leucine aminopeptidase 2 (662 aa).

A peptide-binding positions include 178 to 180 (QLE) and 304 to 309 (PYGGME). His333 contributes to the Zn(2+) binding site. The Proton acceptor role is filled by Glu334. Residues His337 and Glu356 each coordinate Zn(2+). The active-site Proton donor is Tyr422.

This sequence belongs to the peptidase M1 family. It depends on Zn(2+) as a cofactor.

The protein resides in the cytoplasm. Its subcellular location is the nucleus. It catalyses the reaction an epoxide + H2O = an ethanediol. In terms of biological role, aminopeptidase that preferentially cleaves di- and tripeptides. Also has low epoxide hydrolase activity (in vitro). Can hydrolyze the epoxide leukotriene LTA(4) but it forms preferentially 5,6-dihydroxy-7,9,11,14-eicosatetraenoic acid rather than the cytokine leukotriene B(4) as the product compared to the homologous mammalian enzyme (in vitro). The polypeptide is Leucine aminopeptidase 2 (Kluyveromyces lactis (strain ATCC 8585 / CBS 2359 / DSM 70799 / NBRC 1267 / NRRL Y-1140 / WM37) (Yeast)).